Reading from the N-terminus, the 306-residue chain is MSVNLNNNKNNKNKVAIGFISGSLASICATTVTNPIELVKTRLQLQGELQLSQRIYNGVWDAFKQIYKTEGIRGLQSGLIPAYFSQATMQGIRLGSFDLISNALGAKPNQDYFFLKNLLAGATAGAIGAAAGSPFDLVKVRMQAANMYKNDPQFVGYSSSFAAFKQIIQKEGFKGLTRGMLTSAQRTAVGSAIQLSTYGSCKNLVLNFVDDGIYAYIISSMVAGFIVTFGMNPFDVARTRLYFQGKGNSHGEIYKGLMDCVYKTVKKEGFGAVYKGFWAHYLRLGPHTILTLVFWEQFKKLFSGEL.

Residues 1-15 lie on the Mitochondrial intermembrane side of the membrane; sequence MSVNLNNNKNNKNKV. Solcar repeat units lie at residues 13–103, 112–204, and 211–301; these read NKVA…ISNA, YFFL…CKNL, and DGIY…FKKL. The helical transmembrane segment at 16–36 threads the bilayer; the sequence is AIGFISGSLASICATTVTNPI. The Mitochondrial matrix portion of the chain corresponds to 37-83; sequence ELVKTRLQLQGELQLSQRIYNGVWDAFKQIYKTEGIRGLQSGLIPAY. The chain crosses the membrane as a helical span at residues 84 to 103; sequence FSQATMQGIRLGSFDLISNA. Residues 104-117 are Mitochondrial intermembrane-facing; that stretch reads LGAKPNQDYFFLKN. Residues 118-138 traverse the membrane as a helical segment; sequence LLAGATAGAIGAAAGSPFDLV. Residues 139-174 lie on the Mitochondrial matrix side of the membrane; the sequence is KVRMQAANMYKNDPQFVGYSSSFAAFKQIIQKEGFK. The helical transmembrane segment at 175–195 threads the bilayer; it reads GLTRGMLTSAQRTAVGSAIQL. The Mitochondrial intermembrane segment spans residues 196-211; it reads STYGSCKNLVLNFVDD. The helical transmembrane segment at 212-232 threads the bilayer; it reads GIYAYIISSMVAGFIVTFGMN. The Mitochondrial matrix segment spans residues 233 to 276; that stretch reads PFDVARTRLYFQGKGNSHGEIYKGLMDCVYKTVKKEGFGAVYKG. Residues 277 to 295 traverse the membrane as a helical segment; it reads FWAHYLRLGPHTILTLVFW. Over 296-306 the chain is Mitochondrial intermembrane; that stretch reads EQFKKLFSGEL.

The protein belongs to the mitochondrial carrier (TC 2.A.29) family.

The protein resides in the mitochondrion inner membrane. Functionally, mitochondrial solute carriers shuttle metabolites, nucleotides, and cofactors through the mitochondrial inner membrane. Transports oxaloacetate and sulfate. In Dictyostelium discoideum (Social amoeba), this protein is Mitochondrial substrate carrier family protein ucpA (ucpA).